A 438-amino-acid polypeptide reads, in one-letter code: Probable tRNA pseudouridine synthase D (438 aa).

Residue aspartate 86 is the Nucleophile of the active site. The TRUD domain occupies 165-390 (GVPNFFGIQR…SKGTRREVLL (226 aa)).

The protein belongs to the pseudouridine synthase TruD family.

It catalyses the reaction uridine(13) in tRNA = pseudouridine(13) in tRNA. Functionally, could be responsible for synthesis of pseudouridine from uracil-13 in transfer RNAs. In Methanosarcina mazei (strain ATCC BAA-159 / DSM 3647 / Goe1 / Go1 / JCM 11833 / OCM 88) (Methanosarcina frisia), this protein is Probable tRNA pseudouridine synthase D.